A 267-amino-acid chain; its full sequence is GTP cyclohydrolase FolE2 (267 aa).

Belongs to the GTP cyclohydrolase IV family.

It catalyses the reaction GTP + H2O = 7,8-dihydroneopterin 3'-triphosphate + formate + H(+). The protein operates within cofactor biosynthesis; 7,8-dihydroneopterin triphosphate biosynthesis; 7,8-dihydroneopterin triphosphate from GTP: step 1/1. Its function is as follows. Converts GTP to 7,8-dihydroneopterin triphosphate. The polypeptide is GTP cyclohydrolase FolE2 (Geobacter sp. (strain M21)).